The primary structure comprises 409 residues: Probable peptidoglycan glycosyltransferase FtsW (409 aa).

9 helical membrane-spanning segments follow: residues 42–62 (LFTL…SASL), 72–92 (PFHF…VMLA), 108–128 (LLLL…EVNG), 135–155 (VGPI…IYMA), 178–198 (LLFI…VVVL), 213–233 (LWQF…LIIV), 303–323 (FLGV…ALII), 337–357 (YLAY…IGVA), and 368–388 (LPLV…VGLL).

The protein belongs to the SEDS family. FtsW subfamily.

The protein localises to the cell inner membrane. It catalyses the reaction [GlcNAc-(1-&gt;4)-Mur2Ac(oyl-L-Ala-gamma-D-Glu-L-Lys-D-Ala-D-Ala)](n)-di-trans,octa-cis-undecaprenyl diphosphate + beta-D-GlcNAc-(1-&gt;4)-Mur2Ac(oyl-L-Ala-gamma-D-Glu-L-Lys-D-Ala-D-Ala)-di-trans,octa-cis-undecaprenyl diphosphate = [GlcNAc-(1-&gt;4)-Mur2Ac(oyl-L-Ala-gamma-D-Glu-L-Lys-D-Ala-D-Ala)](n+1)-di-trans,octa-cis-undecaprenyl diphosphate + di-trans,octa-cis-undecaprenyl diphosphate + H(+). The protein operates within cell wall biogenesis; peptidoglycan biosynthesis. Peptidoglycan polymerase that is essential for cell division. This Idiomarina loihiensis (strain ATCC BAA-735 / DSM 15497 / L2-TR) protein is Probable peptidoglycan glycosyltransferase FtsW.